The following is a 741-amino-acid chain: Polyribonucleotide nucleotidyltransferase (741 aa).

Positions 489 and 495 each coordinate Mg(2+). One can recognise a KH domain in the interval 556 to 615 (PKIDSIQIPVDKIKVVIGKGGETIDKIIAETGVTIDIDEEGLVQIFSSDQDAIDRAKTII). The S1 motif domain maps to 625 to 693 (GEVYTVPVVR…EKGRVDASIK (69 aa)). The tract at residues 696–741 (LPKPEKNEDGENGEEHRHCCCSHHKPDHHSESMEAPKKSDESETKE) is disordered. 2 stretches are compositionally biased toward basic and acidic residues: residues 698 to 713 (KPEKNEDGENGEEHRH) and 723 to 741 (HHSESMEAPKKSDESETKE).

This sequence belongs to the polyribonucleotide nucleotidyltransferase family. Mg(2+) is required as a cofactor.

The protein resides in the cytoplasm. It catalyses the reaction RNA(n+1) + phosphate = RNA(n) + a ribonucleoside 5'-diphosphate. In terms of biological role, involved in mRNA degradation. Catalyzes the phosphorolysis of single-stranded polyribonucleotides processively in the 3'- to 5'-direction. This Streptococcus thermophilus (strain ATCC BAA-491 / LMD-9) protein is Polyribonucleotide nucleotidyltransferase.